Consider the following 114-residue polypeptide: Large ribosomal subunit protein uL22c (114 aa).

It belongs to the universal ribosomal protein uL22 family. In terms of assembly, part of the 50S ribosomal subunit.

The protein localises to the plastid. The protein resides in the chloroplast. This protein binds specifically to 23S rRNA. Its function is as follows. The globular domain of the protein is located near the polypeptide exit tunnel on the outside of the subunit, while an extended beta-hairpin is found that lines the wall of the exit tunnel in the center of the 70S ribosome. The chain is Large ribosomal subunit protein uL22c (rpl22) from Gracilaria tenuistipitata var. liui (Red alga).